The primary structure comprises 428 residues: MSYLIKNGFMLDEKGEKVQRDIRVEGDAISEIGSLEAASGETVIDADGLFVSPGLVDLHVHFREPGGEKKETIETGAKAAARGGFTTVAAMPNTRPVPDTKEQMEWLVNRIDETASVRVLPYASITIRQTGREMTDFEGLKDAGAFAFTDDGVGVQTAGMMYEAMKKAASINKAIVAHCEDNSLIYGGSVHDGEFAKANGLNGIPSVCEAVHIARDVLLAEAAGCHYHVCHISTKESVRVVRDAKKAGIRVTAEVTPHHLLLSDSDIPGLDTNYKMNPPLRSPEDREALLEGLRDGTIDFIATDHAPHTEEEKQQTMSLAPFGIVGLETAFPLLYTHFVKTGKWTLKQLHDYMTVKPCEAFGLPYGKLEAGRSADITLIDLEREEKIDKSTFLSKGKNTPFDGISCFGWPAMTMAKGKLVYQEGRLVK.

Positions 59 and 61 each coordinate Zn(2+). Substrate is bound by residues 61–63 and asparagine 93; that span reads HFR. 3 residues coordinate Zn(2+): aspartate 151, histidine 178, and histidine 231. Asparagine 277 contacts substrate. Aspartate 304 contacts Zn(2+). The active site involves aspartate 304. Substrate is bound by residues histidine 308 and 322–323; that span reads FG.

This sequence belongs to the metallo-dependent hydrolases superfamily. DHOase family. Class I DHOase subfamily. Zn(2+) is required as a cofactor.

The enzyme catalyses (S)-dihydroorotate + H2O = N-carbamoyl-L-aspartate + H(+). Its pathway is pyrimidine metabolism; UMP biosynthesis via de novo pathway; (S)-dihydroorotate from bicarbonate: step 3/3. Its function is as follows. Catalyzes the reversible cyclization of carbamoyl aspartate to dihydroorotate. The polypeptide is Dihydroorotase (Bacillus licheniformis (strain ATCC 14580 / DSM 13 / JCM 2505 / CCUG 7422 / NBRC 12200 / NCIMB 9375 / NCTC 10341 / NRRL NRS-1264 / Gibson 46)).